The primary structure comprises 610 residues: Glutamine--fructose-6-phosphate aminotransferase [isomerizing] (610 aa).

Cys-2 functions as the Nucleophile; for GATase activity in the catalytic mechanism. Residues 2-218 (CGIVGAVAQR…EGDIAEITRR (217 aa)) enclose the Glutamine amidotransferase type-2 domain. SIS domains lie at 278-426 (IVDS…VKGH) and 459-600 (LAED…VDQP). The For Fru-6P isomerization activity role is filled by Lys-605.

In terms of assembly, homodimer.

Its subcellular location is the cytoplasm. It catalyses the reaction D-fructose 6-phosphate + L-glutamine = D-glucosamine 6-phosphate + L-glutamate. In terms of biological role, catalyzes the first step in hexosamine metabolism, converting fructose-6P into glucosamine-6P using glutamine as a nitrogen source. This chain is Glutamine--fructose-6-phosphate aminotransferase [isomerizing], found in Haemophilus influenzae (strain ATCC 51907 / DSM 11121 / KW20 / Rd).